Reading from the N-terminus, the 332-residue chain is MEAIINKLYQQASLTEQESQQLFDTIIRGELDPILMASALTALKIKGETPDEIAGAAKALLANAQPFPRPDYDFADIVGTGGDGHNTINISTTAAFVAAACGLKVAKHGNRSVSSKSGSSDLLDSFGINLAMSAEDTRSAVDNIGVAFLFAPQYHSGVKHAMPVRQTMKTRTIFNILGPLINPARPNIELMGVYSQELVRPIAETMLKMGMKRAAVVHGSGLDEVAIHGDTLVAEIKDGVIHEYTLTPADFGVNTHPLEAIKGGDPEENKAIITHLLTGKGTEAQLSAVAVNVALLMRLFGHEDLKANTQQAIDVMNSGKAYQLVEKLAQHA.

5-phospho-alpha-D-ribose 1-diphosphate is bound by residues Gly-79, 82 to 83 (GD), Thr-87, 89 to 92 (NIST), 107 to 115 (KHGNRSVSS), and Ser-119. Gly-79 lines the anthranilate pocket. Ser-91 is a binding site for Mg(2+). Anthranilate is bound at residue Asn-110. Residue Arg-165 coordinates anthranilate. Asp-223 and Glu-224 together coordinate Mg(2+).

Belongs to the anthranilate phosphoribosyltransferase family. As to quaternary structure, homodimer. It depends on Mg(2+) as a cofactor.

It carries out the reaction N-(5-phospho-beta-D-ribosyl)anthranilate + diphosphate = 5-phospho-alpha-D-ribose 1-diphosphate + anthranilate. It functions in the pathway amino-acid biosynthesis; L-tryptophan biosynthesis; L-tryptophan from chorismate: step 2/5. Its function is as follows. Catalyzes the transfer of the phosphoribosyl group of 5-phosphorylribose-1-pyrophosphate (PRPP) to anthranilate to yield N-(5'-phosphoribosyl)-anthranilate (PRA). The polypeptide is Anthranilate phosphoribosyltransferase (Vibrio vulnificus (strain CMCP6)).